A 450-amino-acid polypeptide reads, in one-letter code: MNYLADTIAAIATAPGRGGVGVIRLSGRNLLPLAGQLSGGRQPRPRHALYTDFVASDGQAIDSGLLLYFPAPHSFTGEDVLELQGHGGPVILRMLLARCLELGARLAEPGEFTKRAFLNDKMDLVEAESVADLIDAQSETAARSALKSLKGAFSAEIHRLVDTLIDLRMLTEATLDFPEEDDVEWLEKADALGRLAAVRRQLATVLATARQGAILREGMHVVLVGQPNVGKSSLMNALAGDEIAIVTDIAGTTRDTVREQIVLDGVPLHIIDTAGLRETTDTVERIGIERTWQAVERADVVLLLVDGRDGVTAADAAILARLPERLPRVFVHNKIDLTGETAGVSEEDGHVVVRLSARGGAGVDALRQVLLEAVGWQGESEGLFLARERHLDAIRRAEAELEAAGQAYGLAAELFAEHLRQAQACLSEITGEFSADDLLGVIFSRFCIGK.

The (6S)-5-formyl-5,6,7,8-tetrahydrofolate site is built by R24, E82, and K121. The 158-residue stretch at 218-375 (GMHVVLVGQP…LRQVLLEAVG (158 aa)) folds into the TrmE-type G domain. Residue N228 coordinates K(+). GTP is bound by residues 228-233 (NVGKSS), 247-253 (TDIAGTT), 272-275 (DTAG), and 356-358 (SAR). Residue S232 participates in Mg(2+) binding. Residues T247, I249, and T252 each contribute to the K(+) site. T253 is a binding site for Mg(2+). K450 lines the (6S)-5-formyl-5,6,7,8-tetrahydrofolate pocket.

Belongs to the TRAFAC class TrmE-Era-EngA-EngB-Septin-like GTPase superfamily. TrmE GTPase family. Homodimer. Heterotetramer of two MnmE and two MnmG subunits. It depends on K(+) as a cofactor.

It localises to the cytoplasm. In terms of biological role, exhibits a very high intrinsic GTPase hydrolysis rate. Involved in the addition of a carboxymethylaminomethyl (cmnm) group at the wobble position (U34) of certain tRNAs, forming tRNA-cmnm(5)s(2)U34. This chain is tRNA modification GTPase MnmE, found in Laribacter hongkongensis (strain HLHK9).